A 449-amino-acid chain; its full sequence is Probable glycine dehydrogenase (decarboxylating) subunit 1 (449 aa).

The protein belongs to the GcvP family. N-terminal subunit subfamily. In terms of assembly, the glycine cleavage system is composed of four proteins: P, T, L and H. In this organism, the P 'protein' is a heterodimer of two subunits.

The enzyme catalyses N(6)-[(R)-lipoyl]-L-lysyl-[glycine-cleavage complex H protein] + glycine + H(+) = N(6)-[(R)-S(8)-aminomethyldihydrolipoyl]-L-lysyl-[glycine-cleavage complex H protein] + CO2. In terms of biological role, the glycine cleavage system catalyzes the degradation of glycine. The P protein binds the alpha-amino group of glycine through its pyridoxal phosphate cofactor; CO(2) is released and the remaining methylamine moiety is then transferred to the lipoamide cofactor of the H protein. This chain is Probable glycine dehydrogenase (decarboxylating) subunit 1, found in Pyrococcus abyssi (strain GE5 / Orsay).